Reading from the N-terminus, the 182-residue chain is Protein SYM1 (182 aa).

3 consecutive transmembrane segments (helical) span residues 51–70, 98–118, and 135–155; these read TLRPFLYGAVLFSLVGDKWY, LIFAPIGVPLYYTAMALMEGG, and LLANWIVWPAFQLCNFSLVPV.

This sequence belongs to the peroxisomal membrane protein PXMP2/4 family.

The protein resides in the mitochondrion inner membrane. May be involved in cellular response to stress. Required to maintain mitochondrial DNA (mtDNA) integrity and stability. The protein is Protein SYM1 (SYM1) of Eremothecium gossypii (strain ATCC 10895 / CBS 109.51 / FGSC 9923 / NRRL Y-1056) (Yeast).